We begin with the raw amino-acid sequence, 389 residues long: Succinyl-diaminopimelate desuccinylase (389 aa).

Position 72 (His-72) interacts with Zn(2+). Residue Asp-74 is part of the active site. Asp-105 lines the Zn(2+) pocket. Glu-144 serves as the catalytic Proton acceptor. 3 residues coordinate Zn(2+): Glu-145, Glu-173, and His-362.

It belongs to the peptidase M20A family. DapE subfamily. As to quaternary structure, homodimer. The cofactor is Zn(2+). Co(2+) is required as a cofactor.

The catalysed reaction is N-succinyl-(2S,6S)-2,6-diaminopimelate + H2O = (2S,6S)-2,6-diaminopimelate + succinate. It participates in amino-acid biosynthesis; L-lysine biosynthesis via DAP pathway; LL-2,6-diaminopimelate from (S)-tetrahydrodipicolinate (succinylase route): step 3/3. Its function is as follows. Catalyzes the hydrolysis of N-succinyl-L,L-diaminopimelic acid (SDAP), forming succinate and LL-2,6-diaminopimelate (DAP), an intermediate involved in the bacterial biosynthesis of lysine and meso-diaminopimelic acid, an essential component of bacterial cell walls. The sequence is that of Succinyl-diaminopimelate desuccinylase from Nitrobacter hamburgensis (strain DSM 10229 / NCIMB 13809 / X14).